The primary structure comprises 347 residues: Heat-inducible transcription repressor HrcA (347 aa).

Belongs to the HrcA family.

In terms of biological role, negative regulator of class I heat shock genes (grpE-dnaK-dnaJ and groELS operons). Prevents heat-shock induction of these operons. This Lactococcus lactis subsp. cremoris (strain SK11) protein is Heat-inducible transcription repressor HrcA.